Consider the following 692-residue polypeptide: MARQVSLEKTRNIGIMAHIDAGKTTTTERILYYTGVTHKIGEVHEGAATMDWMEQEQERGITITSAATTCFWGDHRVNIIDTPGHVDFTIEVERSLRVLDGAVAVFCSVGGVEPQSETVWRQADKYRVPRIAFINKMDRVGADFFRGVGMIRDRLKANPVPIQLPIGAEDTYRGVVDLVEMKAIIWDEESLGAKYHEAEIPADLAEMAQEYREKLIEEIATFDDALMEKYLGGEELTTDEIKAAVRKATIDIQICPVICGSAFKNKGVQNLLDSVVAYLPSPLDIPAITGIDAKSGEEITRKASDDEPFSALAFKIMTDPFVGQLCFFRVYSGVLNSGSYVYNSTKEKKERIGRLLKMHANKREEIKEVYAGDIAAAVGLKYTTTGDTLCPEDSPVVLESIEFPEPVIAIAIEPKTKADQEKLGISLQKLASEDPSFRVRTDEETGQTIISGMGELHLEIIVDRLMREFKVEANVGKPQVAYRETVTKKVKVEGKFVRQSGGRGQYGHVWIELEPQEAGKGYEFVDAIKGGVVPREYIPAVDKGIQEAMETGVLAGYPTVDFKVALVDGSYHEVDSSEMAFKIAGSMAFKEAAAKAGPVLLEPIMSVEVVVPEEYMGDVIGDLNSRRGRIMGMEGRAGAQVVSAMVPLAQMFGYATDLRSATQGRATYTMTFDHYEQVPKSVSEEIVAKVKG.

Positions 8–283 (EKTRNIGIMA…SVVAYLPSPL (276 aa)) constitute a tr-type G domain. GTP-binding positions include 17-24 (AHIDAGKT), 81-85 (DTPGH), and 135-138 (NKMD).

The protein belongs to the TRAFAC class translation factor GTPase superfamily. Classic translation factor GTPase family. EF-G/EF-2 subfamily.

The protein resides in the cytoplasm. In terms of biological role, catalyzes the GTP-dependent ribosomal translocation step during translation elongation. During this step, the ribosome changes from the pre-translocational (PRE) to the post-translocational (POST) state as the newly formed A-site-bound peptidyl-tRNA and P-site-bound deacylated tRNA move to the P and E sites, respectively. Catalyzes the coordinated movement of the two tRNA molecules, the mRNA and conformational changes in the ribosome. In Geobacter sulfurreducens (strain ATCC 51573 / DSM 12127 / PCA), this protein is Elongation factor G 2.